A 329-amino-acid chain; its full sequence is Putative methylthioribose-1-phosphate isomerase (329 aa).

Substrate is bound by residues 50–52, Arg84, and Gln182; that span reads RGA. Catalysis depends on Asp223, which acts as the Proton donor. 233–234 provides a ligand contact to substrate; it reads NK.

Belongs to the eIF-2B alpha/beta/delta subunits family. MtnA subfamily.

The enzyme catalyses 5-(methylsulfanyl)-alpha-D-ribose 1-phosphate = 5-(methylsulfanyl)-D-ribulose 1-phosphate. In terms of biological role, catalyzes the interconversion of methylthioribose-1-phosphate (MTR-1-P) into methylthioribulose-1-phosphate (MTRu-1-P). The polypeptide is Putative methylthioribose-1-phosphate isomerase (Methanocaldococcus jannaschii (strain ATCC 43067 / DSM 2661 / JAL-1 / JCM 10045 / NBRC 100440) (Methanococcus jannaschii)).